A 170-amino-acid polypeptide reads, in one-letter code: J domain-containing protein (170 aa).

In terms of domain architecture, J spans Asp17 to Arg82. The segment at Gln101 to Ile170 is disordered. Residues Asn110 to Pro120 are compositionally biased toward basic and acidic residues. Low complexity-rich tracts occupy residues Gly121 to Gly135 and Gly142 to Gly153.

This chain is J domain-containing protein (jdp), found in Manduca sexta (Tobacco hawkmoth).